A 211-amino-acid polypeptide reads, in one-letter code: MANAGLQLLGFILASLGWIGSIVSTALPQWKIYSYAGDNIVTAQAIYEGLWMSCVSQSTGQIQCKVFDSLLNLNSTLQATRALMVIGILLGLIAIFVSTIGMKCMRCLEDDEVQKMWMAVIGGIIFLISGLATLVATAWYGNRIVQEFYDPLTPINARYEFGQALFTGWAAASLCLLGGVLLSCSCPRKTTSYPTPRPYPKPTPSSGKDYV.

Residues 1-7 (MANAGLQ) lie on the Cytoplasmic side of the membrane. The helical transmembrane segment at 8-28 (LLGFILASLGWIGSIVSTALP) threads the bilayer. The Extracellular segment spans residues 29–81 (QWKIYSYAGDNIVTAQAIYEGLWMSCVSQSTGQIQCKVFDSLLNLNSTLQATR). Cys-54 and Cys-64 are oxidised to a cystine. The chain crosses the membrane as a helical span at residues 82-102 (ALMVIGILLGLIAIFVSTIGM). The Cytoplasmic portion of the chain corresponds to 103–115 (KCMRCLEDDEVQK). A helical membrane pass occupies residues 116–136 (MWMAVIGGIIFLISGLATLVA). Residues 137–163 (TAWYGNRIVQEFYDPLTPINARYEFGQ) are Extracellular-facing. Residues 164-184 (ALFTGWAAASLCLLGGVLLSC) form a helical membrane-spanning segment. Topologically, residues 185 to 211 (SCPRKTTSYPTPRPYPKPTPSSGKDYV) are cytoplasmic. The interval 190-211 (TTSYPTPRPYPKPTPSSGKDYV) is disordered. The tract at residues 210 to 211 (YV) is interactions with TJP1, TJP2, TJP3 and PATJ.

This sequence belongs to the claudin family. In terms of assembly, can form homo- and heteropolymers with other CLDN. Homopolymers interact with CLDN3, but not CLDN2, homopolymers. Directly interacts with TJP1/ZO-1, TJP2/ZO-2 and TJP3/ZO-3. Interacts with MPDZ and PATJ. Interacts with OCLN, CD81, CLDN4, CLDN6 and CLDN9. In terms of tissue distribution, detected in epidermis and liver (at protein level). Widely expressed, with highest levels in liver and kidney.

The protein localises to the cell junction. Its subcellular location is the tight junction. It localises to the cell membrane. The protein resides in the basolateral cell membrane. Functionally, claudins function as major constituents of the tight junction complexes that regulate the permeability of epithelia. While some claudin family members play essential roles in the formation of impermeable barriers, others mediate the permeability to ions and small molecules. Often, several claudin family members are coexpressed and interact with each other, and this determines the overall permeability. CLDN1 is required to prevent the paracellular diffusion of small molecules through tight junctions in the epidermis and is required for the normal barrier function of the skin. Required for normal water homeostasis and to prevent excessive water loss through the skin, probably via an indirect effect on the expression levels of other proteins, since CLDN1 itself seems to be dispensable for water barrier formation in keratinocyte tight junctions. In Mus musculus (Mouse), this protein is Claudin-1 (Cldn1).